The sequence spans 445 residues: GTPase Der (445 aa).

2 consecutive EngA-type G domains span residues 3–167 (PVIA…YAGQ) and 180–353 (IKIA…AAAM). Residues 9 to 16 (GRPNVGKS), 56 to 60 (DTGGF), 119 to 122 (NKAE), 186 to 193 (GRPNVGKS), 233 to 237 (DTAGL), and 298 to 301 (NKWD) each bind GTP. One can recognise a KH-like domain in the interval 354–438 (AKLPTPKLTR…PLRIEFRSSN (85 aa)).

This sequence belongs to the TRAFAC class TrmE-Era-EngA-EngB-Septin-like GTPase superfamily. EngA (Der) GTPase family. In terms of assembly, associates with the 50S ribosomal subunit.

GTPase that plays an essential role in the late steps of ribosome biogenesis. The sequence is that of GTPase Der from Burkholderia cenocepacia (strain HI2424).